A 101-amino-acid chain; its full sequence is Small ribosomal subunit protein uS14 (101 aa).

It belongs to the universal ribosomal protein uS14 family. Part of the 30S ribosomal subunit. Contacts proteins S3 and S10.

Its function is as follows. Binds 16S rRNA, required for the assembly of 30S particles and may also be responsible for determining the conformation of the 16S rRNA at the A site. The polypeptide is Small ribosomal subunit protein uS14 (Burkholderia multivorans (strain ATCC 17616 / 249)).